A 118-amino-acid chain; its full sequence is MPREDAHFIYGYPKKGHGHSYTTAEEAAGIGILTVILGVLLLIGCWYCRRRNGYRALMDKSLHVGTQCALTRRCPQEGFDHRDSKVSLQEKNCEPVVPNAPPAYEKLSAEQSPPPYSP.

The chain crosses the membrane as a helical span at residues 27–47; the sequence is AAGIGILTVILGVLLLIGCWY. Topologically, residues 48 to 118 are cytoplasmic; sequence CRRRNGYRAL…AEQSPPPYSP (71 aa). Positions 78–118 are disordered; sequence GFDHRDSKVSLQEKNCEPVVPNAPPAYEKLSAEQSPPPYSP. Ser-108 carries the post-translational modification Phosphoserine.

As to quaternary structure, interacts with PMEL. Interacts with GPR143. In terms of processing, acylated. In terms of tissue distribution, expression is restricted to melanoma and melanocyte cell lines and retina.

It is found in the endoplasmic reticulum membrane. It localises to the golgi apparatus. Its subcellular location is the trans-Golgi network membrane. The protein localises to the melanosome. Its function is as follows. Involved in melanosome biogenesis by ensuring the stability of GPR143. Plays a vital role in the expression, stability, trafficking, and processing of melanocyte protein PMEL, which is critical to the formation of stage II melanosomes. The sequence is that of Melanoma antigen recognized by T-cells 1 (MLANA) from Homo sapiens (Human).